The sequence spans 941 residues: MNKKKKPFLGMPAPLGYVPGLGRGATGFTTRSDIGPARDANDPVDDRHAPPGKRTVGDQMKKNQAADDDDEDLNDTNYDEFNGYAGSLFSSGPYEKDDEEADAIYAALDKRMDERRKERREQREKEEIEKYRMERPKIQQQFSDLKRKLAEVTEEEWLSIPEVGDARNKRQRNPRYEKLTPVPDSFFAKHLQTGENHTSVDPRQTQFGGLNTPYPGGLNTPYPGGMTPGLMTPGTGELDMRKIGQARNTLMDMRLSQVSDSVSGQTVVDPKGYLTDLNSMIPTHGGDINDIKKARLLLKSVRETNPHHPPAWIASARLEEVTGKLQVARNLIMKGTEMCPKSEDVWLEAARLQPGDTAKAVVAQAVRHLPQFVRIYIRAAELETDIRAKKRVLRKALEHVPNSVRLWKAAVELEEPEDARIMLSRAVECCPTSVELWLALARLETYENARKVLNKARENIPTDRHIWITAAKLEEANGNTQMVEKIIDRAITSLRANGVEINREQWIQDAEECDRAGSVATCQAVMRAVIGIGIEEEDRKHTWMEDADSCVAHNALECARAIYAYALQVFPSKKSVWLRAAYFGKNHGTRESLEALLQRAVAHCPKAEVLWLMGAKSKWLTGDVPAARSILALAFQANPNSEEIWLAAVKLESENDEYERARRLLAKARSSAPTARVFMKSVKLEWVQDNIRAAQDLCEEALRHYEDFPKLWMMKGQIEEQKEMMEKAREAYNQGLKKCPHSTPLWLLLSRLEEKIGQLTRTRAILEKSRLKNPKNPGLWLESVRLEYRAGLKNIANTLMAKALQECPNSGILWSEAIFLEARPQRRTKSVDALKKCEHDPHVLLAVAKLFWSQRKITKAREWFHRTVKIDSDLGDAWAFFYKFELQHGTEERQEEVRKRCESAEPRHGELWCAVSEDIANWQKKIGDILRLVAGRIKNTF.

The interval 1–79 (MNKKKKPFLG…DEDLNDTNYD (79 aa)) is disordered. Basic and acidic residues predominate over residues 39–65 (DANDPVDDRHAPPGKRTVGDQMKKNQA). The segment covering 66 to 78 (ADDDDEDLNDTNY) has biased composition (acidic residues). Serine 143 bears the Phosphoserine mark. 3 positions are modified to phosphothreonine: threonine 180, threonine 266, and threonine 275. Residue serine 279 is modified to Phosphoserine. HAT repeat units follow at residues 384 to 416 (TDIRAKKRVLRKALEHVPNSVRLWKAAVELEEP), 418 to 444 (DARIMLSRAVECCPTSVELWLALARLE), 445 to 476 (TYENARKVLNKARENIPTDRHIWITAAKLEEA), 554 to 586 (NALECARAIYAYALQVFPSKKSVWLRAAYFGKN), 588 to 620 (GTRESLEALLQRAVAHCPKAEVLWLMGAKSKWL), 622 to 654 (GDVPAARSILALAFQANPNSEEIWLAAVKLESE), 689 to 721 (DNIRAAQDLCEEALRHYEDFPKLWMMKGQIEEQ), 723 to 755 (EMMEKAREAYNQGLKKCPHSTPLWLLLSRLEEK), and 855 to 887 (RKITKAREWFHRTVKIDSDLGDAWAFFYKFELQ).

As to quaternary structure, identified in the spliceosome B complex. Identified in the spliceosome C complex. Associates with the U5 snRNP particle. Component of the U4/U6-U5 tri-snRNP complex composed of the U4, U6 and U5 snRNAs and at least PRPF3, PRPF4, PRPF6, PRPF8, PRPF31, SNRNP200, TXNL4A, SNRNP40, DDX23, CD2BP2, PPIH, SNU13, EFTUD2, SART1 and USP39, LSm proteins LSm2-8 and Sm proteins. Interacts with ARAF1. Interacts with AR and NR3C1, but not ESR1, independently of the presence of hormones. Interacts with USH1G. Post-translationally, phosphorylated by PRP4K during spliceosome assembly.

It localises to the nucleus. Its subcellular location is the nucleoplasm. It is found in the nucleus speckle. Functionally, involved in pre-mRNA splicing as component of the U4/U6-U5 tri-snRNP complex, one of the building blocks of the spliceosome. Enhances dihydrotestosterone-induced transactivation activity of AR, as well as dexamethasone-induced transactivation activity of NR3C1, but does not affect estrogen-induced transactivation. This chain is Pre-mRNA-processing factor 6 (PRPF6), found in Pongo abelii (Sumatran orangutan).